Reading from the N-terminus, the 331-residue chain is Putative sigma L-dependent transcriptional regulator YplP (331 aa).

In terms of domain architecture, Sigma-54 factor interaction spans 12–213 (HLIGEHQTFL…LKNAADYMAA (202 aa)). 95–104 (AVRGTLFLDD) is an ATP binding site.

May play a role in cold adaptation. The polypeptide is Putative sigma L-dependent transcriptional regulator YplP (yplP) (Bacillus subtilis (strain 168)).